The following is a 275-amino-acid chain: NH(3)-dependent NAD(+) synthetase (275 aa).

ATP is bound at residue 47–54 (GISGGQDS). Residue D53 participates in Mg(2+) binding. R139 contacts deamido-NAD(+). T159 provides a ligand contact to ATP. E164 contributes to the Mg(2+) binding site. Positions 172 and 179 each coordinate deamido-NAD(+). Residues K188 and T210 each contribute to the ATP site. A deamido-NAD(+)-binding site is contributed by 259-260 (HK).

It belongs to the NAD synthetase family. Homodimer.

It carries out the reaction deamido-NAD(+) + NH4(+) + ATP = AMP + diphosphate + NAD(+) + H(+). It participates in cofactor biosynthesis; NAD(+) biosynthesis; NAD(+) from deamido-NAD(+) (ammonia route): step 1/1. Its function is as follows. Catalyzes the ATP-dependent amidation of deamido-NAD to form NAD. Uses ammonia as a nitrogen source. The chain is NH(3)-dependent NAD(+) synthetase from Staphylococcus epidermidis (strain ATCC 35984 / DSM 28319 / BCRC 17069 / CCUG 31568 / BM 3577 / RP62A).